The following is a 357-amino-acid chain: DNA primase small subunit PriS (357 aa).

Active-site residues include Asp105, Asp107, and Asp259.

This sequence belongs to the eukaryotic-type primase small subunit family. In terms of assembly, heterodimer of a small subunit (PriS) and a large subunit (PriL). Mg(2+) is required as a cofactor. It depends on Mn(2+) as a cofactor.

Its function is as follows. Catalytic subunit of DNA primase, an RNA polymerase that catalyzes the synthesis of short RNA molecules used as primers for DNA polymerase during DNA replication. The small subunit contains the primase catalytic core and has DNA synthesis activity on its own. Binding to the large subunit stabilizes and modulates the activity, increasing the rate of DNA synthesis while decreasing the length of the DNA fragments, and conferring RNA synthesis capability. The DNA polymerase activity may enable DNA primase to also catalyze primer extension after primer synthesis. May also play a role in DNA repair. In Methanococcus maripaludis (strain C6 / ATCC BAA-1332), this protein is DNA primase small subunit PriS.